A 446-amino-acid chain; its full sequence is Light-independent protochlorophyllide reductase subunit N (446 aa).

[4Fe-4S] cluster contacts are provided by C22, C47, and C107.

It belongs to the BchN/ChlN family. As to quaternary structure, protochlorophyllide reductase is composed of three subunits; ChlL, ChlN and ChlB. Forms a heterotetramer of two ChlB and two ChlN subunits. Requires [4Fe-4S] cluster as cofactor.

It is found in the plastid. Its subcellular location is the chloroplast. It catalyses the reaction chlorophyllide a + oxidized 2[4Fe-4S]-[ferredoxin] + 2 ADP + 2 phosphate = protochlorophyllide a + reduced 2[4Fe-4S]-[ferredoxin] + 2 ATP + 2 H2O. The protein operates within porphyrin-containing compound metabolism; chlorophyll biosynthesis (light-independent). Component of the dark-operative protochlorophyllide reductase (DPOR) that uses Mg-ATP and reduced ferredoxin to reduce ring D of protochlorophyllide (Pchlide) to form chlorophyllide a (Chlide). This reaction is light-independent. The NB-protein (ChlN-ChlB) is the catalytic component of the complex. This Mesostigma viride (Green alga) protein is Light-independent protochlorophyllide reductase subunit N.